Here is a 226-residue protein sequence, read N- to C-terminus: Urease accessory protein UreF (226 aa).

The protein belongs to the UreF family. UreD, UreF and UreG form a complex that acts as a GTP-hydrolysis-dependent molecular chaperone, activating the urease apoprotein by helping to assemble the nickel containing metallocenter of UreC. The UreE protein probably delivers the nickel.

The protein localises to the cytoplasm. Required for maturation of urease via the functional incorporation of the urease nickel metallocenter. In Paraburkholderia phymatum (strain DSM 17167 / CIP 108236 / LMG 21445 / STM815) (Burkholderia phymatum), this protein is Urease accessory protein UreF.